We begin with the raw amino-acid sequence, 290 residues long: Undecaprenyl-diphosphatase (290 aa).

Transmembrane regions (helical) follow at residues 5-25 (IGIF…YFPI), 44-64 (GTAY…TYFY), 88-108 (VRLF…GLAL), 122-142 (LSVI…SESL), 152-172 (IRVI…VPGV), 195-215 (FSFL…LKVL), 226-246 (PIVA…AWLL), and 255-275 (LVFV…LAAG).

It belongs to the UppP family.

Its subcellular location is the cell inner membrane. The enzyme catalyses di-trans,octa-cis-undecaprenyl diphosphate + H2O = di-trans,octa-cis-undecaprenyl phosphate + phosphate + H(+). Functionally, catalyzes the dephosphorylation of undecaprenyl diphosphate (UPP). Confers resistance to bacitracin. The polypeptide is Undecaprenyl-diphosphatase (Gloeobacter violaceus (strain ATCC 29082 / PCC 7421)).